The chain runs to 391 residues: Probable acridone synthase 3 (391 aa).

Residue Cys-164 is part of the active site.

This sequence belongs to the thiolase-like superfamily. Chalcone/stilbene synthases family.

It catalyses the reaction N-methylanthraniloyl-CoA + 3 malonyl-CoA + 3 H(+) = 1,3-dihydroxy-N-methylacridone + 3 CO2 + 4 CoA + H2O. The protein is Probable acridone synthase 3 (ACS3) of Ruta graveolens (Common rue).